The sequence spans 327 residues: MASFSPLLAMALAIFIFSSHSNAQLSSTFYSTTCPNVSAIVRTVVQQALQNDARIGGSLIRLHFHDCFVDGCDGSLLLDNNGTTIVSEKDALPNTNSTRGFDVVDNIKTAVENACPGVVSCVDILALASESSVSLAGGPSWNVLLGRRDRRTANQGGANTSLPSPFENLTNLTQKFTNVGLNVNDLVALSGAHTFGRAQCRTFSPRLFNFSNTGNPDPTLNTTYLATLQQICPQGGSGFTVTNLDPTTPDTFDNNYFSNLQTNRGLLQSDQELFSTSGAPTIAIVNNFSANQTAFFESFVQSMINMGNISPLTGSNGEIRSNCRRPN.

The signal sequence occupies residues 1–23 (MASFSPLLAMALAIFIFSSHSNA). Pyrrolidone carboxylic acid is present on Q24. Disulfide bonds link C34–C115, C67–C72, C121–C323, and C200–C232. N-linked (GlcNAc...) asparagine glycosylation is present at N36. Catalysis depends on H65, which acts as the Proton acceptor. Ca(2+) contacts are provided by D66, V69, G71, D73, and S75. Residues N81, N96, and N159 are each glycosylated (N-linked (GlcNAc...) asparagine). A substrate-binding site is contributed by P163. N-linked (GlcNAc...) asparagine glycosylation is found at N168 and N171. H193 serves as a coordination point for heme b. T194 lines the Ca(2+) pocket. Residues N209 and N221 are each glycosylated (N-linked (GlcNAc...) asparagine). Residues D245, T248, and D253 each contribute to the Ca(2+) site. N287 and N291 each carry an N-linked (GlcNAc...) asparagine glycan.

This sequence belongs to the peroxidase family. Classical plant (class III) peroxidase subfamily. Ca(2+) is required as a cofactor. Requires heme b as cofactor.

The protein resides in the secreted. It carries out the reaction 2 a phenolic donor + H2O2 = 2 a phenolic radical donor + 2 H2O. Its function is as follows. Removal of H(2)O(2), oxidation of toxic reductants, biosynthesis and degradation of lignin, suberization, auxin catabolism, response to environmental stresses such as wounding, pathogen attack and oxidative stress. These functions might be dependent on each isozyme/isoform in each plant tissue. The sequence is that of Peroxidase 15 from Ipomoea batatas (Sweet potato).